A 162-amino-acid polypeptide reads, in one-letter code: 2-C-methyl-D-erythritol 2,4-cyclodiphosphate synthase (162 aa).

2 residues coordinate a divalent metal cation: aspartate 12 and histidine 14. Residues aspartate 12–histidine 14 and histidine 38–serine 39 each bind 4-CDP-2-C-methyl-D-erythritol 2-phosphate. Histidine 46 is an a divalent metal cation binding site. Residues aspartate 60–glycine 62, phenylalanine 65–aspartate 69, and arginine 146 each bind 4-CDP-2-C-methyl-D-erythritol 2-phosphate.

The protein belongs to the IspF family. In terms of assembly, homotrimer. A divalent metal cation is required as a cofactor.

It catalyses the reaction 4-CDP-2-C-methyl-D-erythritol 2-phosphate = 2-C-methyl-D-erythritol 2,4-cyclic diphosphate + CMP. Its pathway is isoprenoid biosynthesis; isopentenyl diphosphate biosynthesis via DXP pathway; isopentenyl diphosphate from 1-deoxy-D-xylulose 5-phosphate: step 4/6. Involved in the biosynthesis of isopentenyl diphosphate (IPP) and dimethylallyl diphosphate (DMAPP), two major building blocks of isoprenoid compounds. Catalyzes the conversion of 4-diphosphocytidyl-2-C-methyl-D-erythritol 2-phosphate (CDP-ME2P) to 2-C-methyl-D-erythritol 2,4-cyclodiphosphate (ME-CPP) with a corresponding release of cytidine 5-monophosphate (CMP). The chain is 2-C-methyl-D-erythritol 2,4-cyclodiphosphate synthase from Bordetella bronchiseptica (strain ATCC BAA-588 / NCTC 13252 / RB50) (Alcaligenes bronchisepticus).